We begin with the raw amino-acid sequence, 190 residues long: Small ribosomal subunit protein eS7B (190 aa).

S2 carries the N-acetylserine modification. Phosphoserine is present on residues S10 and S31. Glycyl lysine isopeptide (Lys-Gly) (interchain with G-Cter in ubiquitin) cross-links involve residues K83 and K84.

This sequence belongs to the eukaryotic ribosomal protein eS7 family. In terms of assembly, component of the small ribosomal subunit (SSU). Mature yeast ribosomes consist of a small (40S) and a large (60S) subunit. The 40S small subunit contains 1 molecule of ribosomal RNA (18S rRNA) and 33 different proteins (encoded by 57 genes). The large 60S subunit contains 3 rRNA molecules (25S, 5.8S and 5S rRNA) and 46 different proteins (encoded by 81 genes). Interacts with snoRNA U3. uS11 interacts with MPP10. Component of the ribosomal small subunit (SSU) processome composed of at least 40 protein subunits and snoRNA U3. Post-translationally, N-terminally acetylated by acetyltransferase NatA. In terms of processing, ubiquitinated at Lys-83 and Lys-84 in response to stalled ribosomes, leading to activation of the No-Go Decay (NGD) pathway: first monoubiquitinated by MOT2/NOT4, followed by formation by HEL2 of 'Lys-63'-linked polyubiquitin chains on monoubiquitin.

It localises to the cytoplasm. It is found in the nucleus. Its subcellular location is the nucleolus. Component of the ribosome, a large ribonucleoprotein complex responsible for the synthesis of proteins in the cell. The small ribosomal subunit (SSU) binds messenger RNAs (mRNAs) and translates the encoded message by selecting cognate aminoacyl-transfer RNA (tRNA) molecules. The large subunit (LSU) contains the ribosomal catalytic site termed the peptidyl transferase center (PTC), which catalyzes the formation of peptide bonds, thereby polymerizing the amino acids delivered by tRNAs into a polypeptide chain. The nascent polypeptides leave the ribosome through a tunnel in the LSU and interact with protein factors that function in enzymatic processing, targeting, and the membrane insertion of nascent chains at the exit of the ribosomal tunnel. eS7 is involved in nucleolar processing of pre-18S ribosomal RNA and ribosome assembly. This Saccharomyces cerevisiae (strain ATCC 204508 / S288c) (Baker's yeast) protein is Small ribosomal subunit protein eS7B.